A 176-amino-acid polypeptide reads, in one-letter code: Cell division control protein 31 (176 aa).

Positions 1–12 (MFANARAKRRSR) are enriched in basic residues. The segment at 1-21 (MFANARAKRRSRASSPTPARL) is disordered. 4 consecutive EF-hand domains span residues 34 to 69 (EQRQ…LGFN), 70 to 105 (AEKS…KIVE), 107 to 142 (DPLE…LNEN), and 143 to 176 (IDDQ…MDEA). Ca(2+)-binding residues include D47, D49, D51, and E58. The Ca(2+) site is built by D156, D158, D160, E162, and E167.

It belongs to the centrin family. In terms of assembly, component of the spindle pole body (SPB), acting as the connector of microtubule arrays in the cytoplasm and the nucleoplasm, is involved in nuclear positioning before chromosome segregation, SPB separation, spindle formation, chromosome segregation, nuclear migration into the bud, nuclear reorientation after cytokinesis and nuclear fusion during conjugation. The SPB half-bridge, which is tightly associated with the cytoplasmic side of the nuclear envelope and the SPB, is playing a key role as the starting structure for and in the initiation of SPB duplication in G1. Within the complex, interacts with sad1.

Its subcellular location is the nucleus. Required for the proper coordination between exit from mitosis and the initiation of septation. Has a role in bipolar spindle formation during spindle pole body (SPB) duplication. Required for the localization of sad1 to the SPB. The polypeptide is Cell division control protein 31 (cdc31) (Schizosaccharomyces pombe (strain 972 / ATCC 24843) (Fission yeast)).